A 249-amino-acid polypeptide reads, in one-letter code: Tabinhibitin 4 (249 aa).

An N-terminal signal peptide occupies residues 1–23 (MTLNVYFVLLSPYSLQSVPLPLT). Positions 31-33 (RGD) match the Cell attachment site motif. In terms of domain architecture, SCP spans 64–207 (LQKTNWLRGV…LKRALFTCNF (144 aa)). The Cell attachment site signature appears at 220–222 (RGD).

This sequence belongs to the CRISP family. As to expression, expressed in salivary glands.

The protein resides in the secreted. Inhibits platelet aggregation induced by all agonists tested (ADP, arachidonic acid, the thromboxane A2 analog U46619, thrombin, and snake venom snaclecs (TMVA that activates platelet through GPIB, and stejnulxin that specifically acts through GPVI (GP6))). May act by competing with fibrinogen for binding to glycoprotein IIb/IIIa (ITGA2B/ITGB3). In Tabanus yao (Horsefly), this protein is Tabinhibitin 4.